The sequence spans 583 residues: Radixin (583 aa).

Residues 5 to 295 (INVRVTTMDA…GNHELYMRRR (291 aa)) form the FERM domain. Residues 60–63 (KLNK) and Lys278 contribute to the a 1,2-diacyl-sn-glycero-3-phospho-(1D-myo-inositol) site. Disordered regions lie at residues 310–336 (REEK…AEKE) and 436–527 (KKKE…VKKQ). Basic and acidic residues-rich tracts occupy residues 436–447 (KKKEEEASEWQH) and 455–464 (DLEKTKEELK). Residues 469–480 (APPPPPPPPVIP) show a composition bias toward pro residues. Composition is skewed to basic and acidic residues over residues 483-492 (ENEHDEHDEN) and 506-525 (MNHR…ERVK).

Its subcellular location is the cell membrane. It is found in the cytoplasm. The protein localises to the cytoskeleton. Probably plays a crucial role in the binding of the barbed end of actin filaments to the plasma membrane. In Gallus gallus (Chicken), this protein is Radixin (RDX).